The following is a 295-amino-acid chain: Lipoyl synthase (295 aa).

[4Fe-4S] cluster is bound by residues cysteine 34, cysteine 39, cysteine 45, cysteine 60, cysteine 64, cysteine 67, and serine 273. The Radical SAM core domain maps to 46-262 (WNKRHATIMV…KRMAYAKGFS (217 aa)).

The protein belongs to the radical SAM superfamily. Lipoyl synthase family. [4Fe-4S] cluster is required as a cofactor.

The protein resides in the cytoplasm. The enzyme catalyses [[Fe-S] cluster scaffold protein carrying a second [4Fe-4S](2+) cluster] + N(6)-octanoyl-L-lysyl-[protein] + 2 oxidized [2Fe-2S]-[ferredoxin] + 2 S-adenosyl-L-methionine + 4 H(+) = [[Fe-S] cluster scaffold protein] + N(6)-[(R)-dihydrolipoyl]-L-lysyl-[protein] + 4 Fe(3+) + 2 hydrogen sulfide + 2 5'-deoxyadenosine + 2 L-methionine + 2 reduced [2Fe-2S]-[ferredoxin]. The protein operates within protein modification; protein lipoylation via endogenous pathway; protein N(6)-(lipoyl)lysine from octanoyl-[acyl-carrier-protein]: step 2/2. Functionally, catalyzes the radical-mediated insertion of two sulfur atoms into the C-6 and C-8 positions of the octanoyl moiety bound to the lipoyl domains of lipoate-dependent enzymes, thereby converting the octanoylated domains into lipoylated derivatives. In Anaplasma phagocytophilum (strain HZ), this protein is Lipoyl synthase.